Reading from the N-terminus, the 532-residue chain is Light-independent protochlorophyllide reductase subunit B (532 aa).

D36 is a [4Fe-4S] cluster binding site. Catalysis depends on D318, which acts as the Proton donor. Position 453–454 (453–454 (GM)) interacts with substrate.

This sequence belongs to the ChlB/BchB/BchZ family. In terms of assembly, protochlorophyllide reductase is composed of three subunits; ChlL, ChlN and ChlB. Forms a heterotetramer of two ChlB and two ChlN subunits. [4Fe-4S] cluster is required as a cofactor.

The protein localises to the plastid. It localises to the chloroplast. It carries out the reaction chlorophyllide a + oxidized 2[4Fe-4S]-[ferredoxin] + 2 ADP + 2 phosphate = protochlorophyllide a + reduced 2[4Fe-4S]-[ferredoxin] + 2 ATP + 2 H2O. The protein operates within porphyrin-containing compound metabolism; chlorophyll biosynthesis (light-independent). Its function is as follows. Component of the dark-operative protochlorophyllide reductase (DPOR) that uses Mg-ATP and reduced ferredoxin to reduce ring D of protochlorophyllide (Pchlide) to form chlorophyllide a (Chlide). This reaction is light-independent. The NB-protein (ChlN-ChlB) is the catalytic component of the complex. This Tetradesmus obliquus (Green alga) protein is Light-independent protochlorophyllide reductase subunit B.